Here is a 370-residue protein sequence, read N- to C-terminus: MGLEEDIESLEEEIANTPYNKSTEAHIGRLKAKLAEQKEKLEAQQSGSGGGGGYAVEQHGDATVALVGFPSVGKSSLINAMTNADSEVGAYEFTTLNVNPGMLEYRGANIQLLDVPGLIEGAAGGRGGGKEILSVIRGADLVIFVLSAFEIEQYDRLAEELYNVNIRVDAEPPSVTVRRKGKDGIDVNTSGELELDSDTVKGILRERGFINANVTIRGNPSVDRLIDGVMDNRVYMPSLVTVNKVDLIEPSYAGTMKDALRDHGVSPDDAIFISAAEEKGLDVLKERMWRALGLIRIYMDKPGRGVDREEPLIIRRGETVDDAVQKLGGTLDERFRFARVTGPSAQHDDQQVGRDHVLEDEDVLRVVARR.

The 232-residue stretch at 62–293 (ATVALVGFPS…LKERMWRALG (232 aa)) folds into the OBG-type G domain. GTP contacts are provided by residues 68-75 (GFPSVGKS), 114-118 (DVPGL), and 243-246 (NKVD). Residues 293–368 (GLIRIYMDKP…EDEDVLRVVA (76 aa)) form the TGS domain.

The protein belongs to the TRAFAC class OBG-HflX-like GTPase superfamily. OBG GTPase family.

This is an uncharacterized protein from Halobacterium salinarum (strain ATCC 700922 / JCM 11081 / NRC-1) (Halobacterium halobium).